Reading from the N-terminus, the 490-residue chain is Betaine aldehyde dehydrogenase (490 aa).

The K(+) site is built by Thr26 and Asp93. Position 150 to 152 (150 to 152) interacts with NAD(+); it reads GAW. The active-site Charge relay system is the Lys162. 176–179 is a binding site for NAD(+); it reads KPSE. Val180 is a K(+) binding site. 230–233 serves as a coordination point for NAD(+); it reads GVAT. Leu246 provides a ligand contact to K(+). Glu252 acts as the Proton acceptor in catalysis. Gly254, Cys286, and Glu387 together coordinate NAD(+). The active-site Nucleophile is the Cys286. The residue at position 286 (Cys286) is a Cysteine sulfenic acid (-SOH). K(+)-binding residues include Lys457 and Gly460. Glu464 functions as the Charge relay system in the catalytic mechanism.

The protein belongs to the aldehyde dehydrogenase family. In terms of assembly, dimer of dimers. The cofactor is K(+).

The catalysed reaction is betaine aldehyde + NAD(+) + H2O = glycine betaine + NADH + 2 H(+). The protein operates within amine and polyamine biosynthesis; betaine biosynthesis via choline pathway; betaine from betaine aldehyde: step 1/1. In terms of biological role, involved in the biosynthesis of the osmoprotectant glycine betaine. Catalyzes the irreversible oxidation of betaine aldehyde to the corresponding acid. The protein is Betaine aldehyde dehydrogenase of Stenotrophomonas maltophilia (strain K279a).